We begin with the raw amino-acid sequence, 566 residues long: Berberine bridge enzyme-like D-2 (566 aa).

The N-terminal stretch at 1–33 (MKRNISMSLQRLLIILMMISFLFTSLLVPSVSA) is a signal peptide. An intrachain disulfide couples Cys-42 to Cys-103. N-linked (GlcNAc...) asparagine glycosylation occurs at Asn-50. The region spanning 81–257 (SKPKPTVIIV…YAWKIRLLKV (177 aa)) is the FAD-binding PCMH-type domain. His-118 carries the pros-8alpha-FAD histidine modification. N-linked (GlcNAc...) asparagine glycans are attached at residues Asn-364, Asn-378, and Asn-503.

Belongs to the oxygen-dependent FAD-linked oxidoreductase family. FAD serves as cofactor.

It is found in the vacuole. It functions in the pathway alkaloid biosynthesis; nicotine biosynthesis. Its function is as follows. Involved in the biosynthesis of pyridine alkaloid natural products, leading mainly to the production of anabasine, anatabine, nicotine and nornicotine, effective deterrents against herbivores with antiparasitic and pesticide properties (neurotoxins); nornicotine serves as the precursor in the synthesis of the carcinogen compound N'-nitrosonornicotine (NNN). Catalyzes a late oxidation step subsequent to the pyridine ring condensation reaction in the biosynthesis of alkaloids. This Nicotiana tabacum (Common tobacco) protein is Berberine bridge enzyme-like D-2.